Here is an 833-residue protein sequence, read N- to C-terminus: Ribosome biogenesis protein BOP1 homolog (833 aa).

Residues 20–202 (NKKSEPIAVS…DSDDSSEDES (183 aa)) are disordered. The span at 36-56 (SKPTTTATTTVSKSPVSTITT) shows a compositional bias: low complexity. 2 stretches are compositionally biased toward acidic residues: residues 90–111 (SEDD…EDVE) and 136–150 (EAEE…EDDS). Positions 154–170 (SSKSSSSTTTTTTTTKK) are enriched in low complexity. The segment covering 182–192 (KQWTNDPNQFY) has biased composition (polar residues). The span at 193 to 202 (DSDDSSEDES) shows a compositional bias: acidic residues. WD repeat units lie at residues 331 to 370 (TKAI…KEKT), 488 to 527 (GHKA…CLYS), and 529 to 569 (EVES…TQTE). Positions 568 to 592 (TEHSPETEKILTKPPTDSSTEQQQN) are disordered. Positions 582-592 (PTDSSTEQQQN) are enriched in polar residues. WD repeat units follow at residues 618-660 (HHPF…TQSP), 663-701 (KSKT…LIKK), 704-743 (TGCR…RPYK), 747-786 (YHKM…DLLQ), and 802-833 (INDL…LYTN).

It belongs to the WD repeat BOP1/ERB1 family.

It is found in the nucleus. Its subcellular location is the nucleolus. The protein localises to the nucleoplasm. In terms of biological role, required for maturation of ribosomal RNAs and formation of the large ribosomal subunit. In Dictyostelium discoideum (Social amoeba), this protein is Ribosome biogenesis protein BOP1 homolog.